Consider the following 146-residue polypeptide: Large ribosomal subunit protein uL15 (146 aa).

Positions 1-51 (MKLHELQPAAGSRKVRNRVGRGTSSGNGKTAGRGQKGQKARSGGGVRLGFE) are disordered. 2 stretches are compositionally biased toward gly residues: residues 23–35 (TSSG…GRGQ) and 42–51 (SGGGVRLGFE).

The protein belongs to the universal ribosomal protein uL15 family. In terms of assembly, part of the 50S ribosomal subunit.

Binds to the 23S rRNA. The chain is Large ribosomal subunit protein uL15 from Streptococcus gordonii (strain Challis / ATCC 35105 / BCRC 15272 / CH1 / DL1 / V288).